We begin with the raw amino-acid sequence, 314 residues long: Glucocorticoid receptor (314 aa).

The segment at A1–T44 is disordered. A modulating region spans residues A1–L281. The segment covering T10–V21 has biased composition (basic and acidic residues). Phosphoserine occurs at positions 65, 73, and 88. K120 is covalently cross-linked (Glycyl lysine isopeptide (Lys-Gly) (interchain with G-Cter in SUMO2)). S129 bears the Phosphoserine mark. Glycyl lysine isopeptide (Lys-Gly) (interchain with G-Cter in SUMO); alternate cross-links involve residues K139 and K155. Residues K139 and K155 each participate in a glycyl lysine isopeptide (Lys-Gly) (interchain with G-Cter in SUMO2); alternate cross-link. S266 carries the post-translational modification Phosphoserine. K280 participates in a covalent cross-link: Glycyl lysine isopeptide (Lys-Gly) (interchain with G-Cter in ubiquitin). The segment at C282 to H314 adopts an NR C4-type zinc-finger fold. The nuclear receptor DNA-binding region spans C282–H314.

Belongs to the nuclear hormone receptor family. NR3 subfamily. As to quaternary structure, heteromultimeric cytoplasmic complex with HSP90AA1, HSPA1A/HSPA1B, and FKBP5 or another immunophilin such as PPID, STIP1, or the immunophilin homolog PPP5C. Upon ligand binding FKBP5 dissociates from the complex and FKBP4 takes its place, thereby linking the complex to dynein and mediating transport to the nucleus, where the complex dissociates. Probably forms a complex composed of chaperones HSP90 and HSP70, co-chaperones CDC37, PPP5C, TSC1 and client protein TSC2, CDK4, AKT, RAF1 and NR3C1; this complex does not contain co-chaperones STIP1/HOP and PTGES3/p23. Directly interacts with UNC45A. Binds to DNA as a homodimer, and as heterodimer with NR3C2 or the retinoid X receptor. Binds STAT5A and STAT5B homodimers and heterodimers. Interacts with NRIP1, POU2F1, POU2F2 and TRIM28. Interacts with several coactivator complexes, including the SMARCA4 complex, CREBBP/EP300, TADA2L (Ada complex) and p160 coactivators such as NCOA2 and NCOA6. Interaction with BAG1 inhibits transactivation. Interacts with HEXIM1 and TGFB1I1. Interacts with NCOA1. Interacts with NCOA3, SMARCA4, SMARCC1, SMARCD1, and SMARCE1. Interacts with CLOCK, CRY1 and CRY2 in a ligand-dependent fashion. Interacts with CIART. Interacts with RWDD3. Interacts with UBE2I/UBC9 and this interaction is enhanced in the presence of RWDD3. Interacts with GRIP1. Interacts with NR4A3 (via nuclear receptor DNA-binding domain), represses transcription activity of NR4A3 on the POMC promoter Nur response element (NurRE). Directly interacts with PNRC2 to attract and form a complex with UPF1 and DCP1A; the interaction leads to rapid mRNA degradation. Interacts with GSK3B. Interacts with FNIP1 and FNIP2. Interacts (via C-terminus) with HNRNPU (via C-terminus). Interacts with MCM3AP. Interacts (via domain NR LBD) with HSP90AA1 and HSP90AB1. In the absence of hormonal ligand, interacts with TACC1. Interacts (via NR LBD domain) with ZNF764 (via KRAB domain); the interaction regulates transcription factor activity of NR3C1 by directing its actions toward certain biologic pathways. In terms of processing, acetylation by CLOCK reduces its binding to glucocorticoid response elements and its transcriptional activity. Post-translationally, increased proteasome-mediated degradation in response to glucocorticoids. Phosphorylated in the absence of hormone; becomes hyperphosphorylated in the presence of glucocorticoid. The Ser-65, Ser-88 and Ser-266-phosphorylated forms are mainly cytoplasmic, and the Ser-73-phosphorylated form is nuclear. Phosphorylation at Ser-73 increases transcriptional activity. Phosphorylation at Ser-65, Ser-88 and Ser-266 decreases signaling capacity. Phosphorylation at Ser-266 may protect from glucocorticoid-induced apoptosis. Phosphorylation at Ser-65 and Ser-73 is not required in regulation of chromosome segregation. May be dephosphorylated by PPP5C, attenuates NR3C1 action. In terms of processing, ubiquitinated by UBR5, leading to its degradation: UBR5 specifically recognizes and binds ligand-bound NR3C1 when it is not associated with coactivators (NCOAs). In presence of NCOAs, the UBR5-degron is not accessible, preventing its ubiquitination and degradation. Post-translationally, sumoylation at Lys-139 and Lys-155 negatively regulates its transcriptional activity. Heat shock increases sumoylation in a RWDD3-dependent manner.

Its subcellular location is the cytoplasm. The protein resides in the nucleus. It is found in the mitochondrion. It localises to the cytoskeleton. The protein localises to the spindle. Its subcellular location is the microtubule organizing center. The protein resides in the centrosome. It is found in the chromosome. It localises to the nucleoplasm. Functionally, receptor for glucocorticoids (GC). Has a dual mode of action: as a transcription factor that binds to glucocorticoid response elements (GRE), both for nuclear and mitochondrial DNA, and as a modulator of other transcription factors. Affects inflammatory responses, cellular proliferation and differentiation in target tissues. Involved in chromatin remodeling. Plays a role in rapid mRNA degradation by binding to the 5' UTR of target mRNAs and interacting with PNRC2 in a ligand-dependent manner which recruits the RNA helicase UPF1 and the mRNA-decapping enzyme DCP1A, leading to RNA decay. Could act as a coactivator for STAT5-dependent transcription upon growth hormone (GH) stimulation and could reveal an essential role of hepatic GR in the control of body growth. Mediates glucocorticoid-induced apoptosis. Promotes accurate chromosome segregation during mitosis. May act as a tumor suppressor. May play a negative role in adipogenesis through the regulation of lipolytic and antilipogenic gene expression. This chain is Glucocorticoid receptor (NR3C1), found in Ovis aries (Sheep).